The primary structure comprises 314 residues: MNNSQISTVTQFVLLGFPGPWKIQIIFFSMILLVYIFTLTGNMAIICAVRWDHRLHTPMYVLLANFSFLEIWYVTCTVPNMLVNFFSKTKTISFSGCFTQFHFFFSLGTTECFFLCVMAYDRYLAICHPLHYPSIMTGQLCGILVSLCWLIGFLGHSISIFFIFQLPFCGPNIIDHFLCDVDPLMALSSAPTHIIGHVFHSVSSLFINLTMVYILGSYTLVLRTVLQVPSSAGWQKAISTCGSHLVVVSLFYGAIMLMYVSPTPGNSVAMHKLITLIYSVVTPVLNPLIYSLRNKDMKYALHHVFCGMRIIQRS.

Residues 1–24 (MNNSQISTVTQFVLLGFPGPWKIQ) lie on the Extracellular side of the membrane. An N-linked (GlcNAc...) asparagine glycan is attached at N2. The chain crosses the membrane as a helical span at residues 25–45 (IIFFSMILLVYIFTLTGNMAI). At 46–57 (ICAVRWDHRLHT) the chain is on the cytoplasmic side. Residues 58-78 (PMYVLLANFSFLEIWYVTCTV) form a helical membrane-spanning segment. Over 79 to 97 (PNMLVNFFSKTKTISFSGC) the chain is Extracellular. Residues C97 and C179 are joined by a disulfide bond. Residues 98 to 118 (FTQFHFFFSLGTTECFFLCVM) form a helical membrane-spanning segment. Residues 119–142 (AYDRYLAICHPLHYPSIMTGQLCG) lie on the Cytoplasmic side of the membrane. A helical transmembrane segment spans residues 143–163 (ILVSLCWLIGFLGHSISIFFI). Residues 164–201 (FQLPFCGPNIIDHFLCDVDPLMALSSAPTHIIGHVFHS) are Extracellular-facing. The helical transmembrane segment at 202–222 (VSSLFINLTMVYILGSYTLVL) threads the bilayer. The Cytoplasmic segment spans residues 223–244 (RTVLQVPSSAGWQKAISTCGSH). Residues 245 to 265 (LVVVSLFYGAIMLMYVSPTPG) form a helical membrane-spanning segment. At 266-271 (NSVAMH) the chain is on the extracellular side. A helical membrane pass occupies residues 272–292 (KLITLIYSVVTPVLNPLIYSL). The Cytoplasmic segment spans residues 293–314 (RNKDMKYALHHVFCGMRIIQRS).

It belongs to the G-protein coupled receptor 1 family.

It localises to the cell membrane. Its function is as follows. Odorant receptor. Activated by isovaleric acid. In Homo sapiens (Human), this protein is Olfactory receptor 11H7 (OR11H7).